Consider the following 301-residue polypeptide: UPF0282 protein Pcal_1546 (301 aa).

This sequence belongs to the UPF0282 family.

This is UPF0282 protein Pcal_1546 from Pyrobaculum calidifontis (strain DSM 21063 / JCM 11548 / VA1).